The chain runs to 478 residues: ATP synthase subunit beta (478 aa).

161-168 (GGAGVGKT) lines the ATP pocket.

The protein belongs to the ATPase alpha/beta chains family. F-type ATPases have 2 components, CF(1) - the catalytic core - and CF(0) - the membrane proton channel. CF(1) has five subunits: alpha(3), beta(3), gamma(1), delta(1), epsilon(1). CF(0) has four main subunits: a(1), b(1), b'(1) and c(9-12).

Its subcellular location is the cell inner membrane. It carries out the reaction ATP + H2O + 4 H(+)(in) = ADP + phosphate + 5 H(+)(out). Its function is as follows. Produces ATP from ADP in the presence of a proton gradient across the membrane. The catalytic sites are hosted primarily by the beta subunits. This is ATP synthase subunit beta from Gloeobacter violaceus (strain ATCC 29082 / PCC 7421).